Consider the following 547-residue polypeptide: MASEILVNIKEEVTCPICLDLLTEPLSLDCGHSFCQACITADHKESTLHQGERSCPLCRVGYQSENLRPNRHLANIAERLREVMLSPEEGQKVDRCARHGEKLLLFCQQHGNVICWLCERSQEHRGHSTFLVEEVAQKYREKLQVALEMMREKQQDAEKLEADVREEQASWKIQIKNDKTNILAEFKQLRDILDCEESNELQNLEKEEENLLKILAQSENDMVLQTQSMRVLIADLEHRLQGSVMELLQGVEGIIKRTTNVTLQKPKTFLNEKRRVFRAPNLKGMLQVFKELKEVQCYWAHVTLVPSHPSCAVISEDQRQVRYQKQRHRPSVKAKYFYGVLGSPSFTSGKHYWEVDVSNKSAWILGVCVSLKCTANVPGIENYQPKNGYWVIGLQNADNYSAFQDAVPGTEDYQPKNGCWRNTGLRNADNYSAFQDVFQPKNDYWVTGLWNADNYNAFQDAGKYSDFQDGSCSTPFAPLIVPLFMTIRPKRVGVFLDYEACTVSFFNVTSNGCLIYKFSNCHFSCPVFPYFSPMTCKLPMTLCSPSS.

At Ala2 the chain carries N-acetylalanine. The segment at 15 to 59 (CPICLDLLTEPLSLDCGHSFCQACITADHKESTLHQGERSCPLCR) adopts an RING-type zinc-finger fold. Ser86 is subject to Phosphoserine. The B box-type zinc-finger motif lies at 91–132 (QKVDRCARHGEKLLLFCQQHGNVICWLCERSQEHRGHSTFLV). Residues Cys96, His99, Cys118, and His124 each coordinate Zn(2+). Positions 132 to 224 (VEEVAQKYRE…LAQSENDMVL (93 aa)) form a coiled coil. The required for interaction with GABARAP and for autophagy stretch occupies residues 186–199 (FKQLRDILDCEESN). Residues 280 to 547 (PNLKGMLQVF…LPMTLCSPSS (268 aa)) enclose the B30.2/SPRY domain.

This sequence belongs to the TRIM/RBCC family. Can form homodimers and homotrimers. In addition to lower-order dimerization, also exhibits a higher-order multimerization and both low- and high-order multimerizations are essential for its restriction activity. Interacts with BTBD1 and BTBD2. Interacts with PSMC4, PSMC5, PSMD7 and HSPA8/HSC70. Interacts (via B30.2/SPRY domain) with HSPA1A/B. Interacts with PSMC2, MAP3K7/TAK1, TAB2 and TAB3. Interacts with SQSTM1. Interacts with TRIM6 and TRIM34. Interacts with ULK1 (phosphorylated form), GABARAP, GABARAPL1, GABARAPL2, MAP1LC3A, MAP1LC3C and BECN1. Degraded in a proteasome-independent fashion in the absence of viral infection but in a proteasome-dependent fashion following exposure to restriction sensitive virus. In terms of processing, autoubiquitinated in a RING finger- and UBE2D2-dependent manner. Monoubiquitinated by TRIM21. Deubiquitinated by Yersinia YopJ. Ubiquitination may not lead to proteasomal degradation.

It localises to the cytoplasm. The protein resides in the nucleus. The catalysed reaction is S-ubiquitinyl-[E2 ubiquitin-conjugating enzyme]-L-cysteine + [acceptor protein]-L-lysine = [E2 ubiquitin-conjugating enzyme]-L-cysteine + N(6)-ubiquitinyl-[acceptor protein]-L-lysine.. The protein operates within protein modification; protein ubiquitination. Its function is as follows. Capsid-specific restriction factor that prevents infection from non-host-adapted retroviruses. Blocks viral replication early in the life cycle, after viral entry but before reverse transcription. In addition to acting as a capsid-specific restriction factor, also acts as a pattern recognition receptor that activates innate immune signaling in response to the retroviral capsid lattice. Binding to the viral capsid triggers its E3 ubiquitin ligase activity, and in concert with the heterodimeric ubiquitin conjugating enzyme complex UBE2V1-UBE2N (also known as UBC13-UEV1A complex) generates 'Lys-63'-linked polyubiquitin chains, which in turn are catalysts in the autophosphorylation of the MAP3K7/TAK1 complex (includes TAK1, TAB2, and TAB3). Activation of the MAP3K7/TAK1 complex by autophosphorylation results in the induction and expression of NF-kappa-B and MAPK-responsive inflammatory genes, thereby leading to an innate immune response in the infected cell. Plays a role in regulating autophagy through activation of autophagy regulator BECN1 by causing its dissociation from its inhibitors BCL2 and TAB2. This chain is Tripartite motif-containing protein 5 (TRIM5), found in Lagothrix lagotricha (Brown woolly monkey).